A 212-amino-acid polypeptide reads, in one-letter code: NADH dehydrogenase [ubiquinone] iron-sulfur protein 8, mitochondrial (212 aa).

A mitochondrion-targeting transit peptide spans 1-36 (MRCLTMPMLLRALAQAQAARAGHASVRGLHSSAVAA). 4Fe-4S ferredoxin-type domains lie at 104–133 (RRYP…IEAE) and 143–172 (TRYD…EGPN). [4Fe-4S] cluster contacts are provided by C113, C116, C119, C123, C152, C155, C158, and C162.

The protein belongs to the complex I 23 kDa subunit family. As to quaternary structure, core subunit of respiratory chain NADH dehydrogenase (Complex I) which is composed of 45 different subunits. This is a component of the iron-sulfur (IP) fragment of the enzyme. Interacts with RAB5IF. Requires [4Fe-4S] cluster as cofactor.

The protein resides in the mitochondrion inner membrane. The catalysed reaction is a ubiquinone + NADH + 5 H(+)(in) = a ubiquinol + NAD(+) + 4 H(+)(out). In terms of biological role, core subunit of the mitochondrial membrane respiratory chain NADH dehydrogenase (Complex I) which catalyzes electron transfer from NADH through the respiratory chain, using ubiquinone as an electron acceptor. Essential for the catalytic activity and assembly of complex I. This is NADH dehydrogenase [ubiquinone] iron-sulfur protein 8, mitochondrial (NDUFS8) from Bos taurus (Bovine).